Consider the following 401-residue polypeptide: Deacetoxyvindoline 4-hydroxylase (401 aa).

The 104-residue stretch at 242-345 folds into the Fe2OG dioxygenase domain; the sequence is CAEGLILLGH…SVAVAFGIKT (104 aa). Fe cation contacts are provided by H268, D270, and H324. R334 lines the 2-oxoglutarate pocket.

The protein belongs to the iron/ascorbate-dependent oxidoreductase family. In terms of assembly, monomer. Requires Fe cation as cofactor. L-ascorbate serves as cofactor. As to expression, highest levels in leaves, lower levels in stems and fruits. Not expressed in flowers and roots.

Its subcellular location is the cytoplasm. The protein resides in the nucleus. The enzyme catalyses deacetoxyvindoline + 2-oxoglutarate + O2 = 4-O-deacetylvindoline + succinate + CO2. It participates in alkaloid biosynthesis; vindoline biosynthesis. In terms of biological role, catalyzes the C4-hydroxylation of desacetoxyvindoline. In Catharanthus roseus (Madagascar periwinkle), this protein is Deacetoxyvindoline 4-hydroxylase.